The sequence spans 549 residues: Probable protein kinase UbiB (549 aa).

One can recognise a Protein kinase domain in the interval Asp-123–Leu-501. ATP-binding positions include Leu-129 to Val-137 and Lys-152. Asp-287 serves as the catalytic Proton acceptor. The next 2 helical transmembrane spans lie at Ser-498–Gln-518 and Ala-520–Trp-540.

The protein belongs to the ABC1 family. UbiB subfamily.

It localises to the cell inner membrane. It functions in the pathway cofactor biosynthesis; ubiquinone biosynthesis [regulation]. Its function is as follows. Is probably a protein kinase regulator of UbiI activity which is involved in aerobic coenzyme Q (ubiquinone) biosynthesis. The protein is Probable protein kinase UbiB of Shewanella halifaxensis (strain HAW-EB4).